Reading from the N-terminus, the 176-residue chain is Large ribosomal subunit protein bL28m (176 aa).

The transit peptide at 1-8 (MASKLLRK) directs the protein to the mitochondrion.

The protein belongs to the bacterial ribosomal protein bL28 family. As to quaternary structure, component of the mitochondrial large ribosomal subunit (mt-LSU). Mature yeast 74S mitochondrial ribosomes consist of a small (37S) and a large (54S) subunit. The 37S small subunit contains a 15S ribosomal RNA (15S mt-rRNA) and at least 32 different proteins. The 54S large subunit contains a 21S rRNA (21S mt-rRNA) and at least 45 different proteins.

It is found in the cytoplasm. It localises to the mitochondrion. Component of the mitochondrial ribosome (mitoribosome), a dedicated translation machinery responsible for the synthesis of mitochondrial genome-encoded proteins, including at least some of the essential transmembrane subunits of the mitochondrial respiratory chain. The mitoribosomes are attached to the mitochondrial inner membrane and translation products are cotranslationally integrated into the membrane. In Schizosaccharomyces pombe (strain 972 / ATCC 24843) (Fission yeast), this protein is Large ribosomal subunit protein bL28m (mrpl24).